The sequence spans 249 residues: Metal-staphylopine import system ATP-binding protein CntF (249 aa).

Residues 2 to 244 (IKIKDVEKSY…DNAYTRELIE (243 aa)) form the ABC transporter domain. ATP is bound at residue 42 to 49 (GESGSGKS).

This sequence belongs to the ABC transporter superfamily. The complex is composed of two ATP-binding proteins (CntD and CntF), two transmembrane proteins (CntB and CntC) and a solute-binding protein (CntA).

It is found in the cell membrane. Its activity is regulated as follows. Nickel/cobalt import is reduced in the presence of zinc. Its function is as follows. Part of the ABC transporter complex CntABCDF (Opp1) involved in the uptake of metal in complex with the metallophore staphylopine (StP). Involved in the import of divalent metals ions such as nickel, cobalt and zinc. Probably responsible for energy coupling to the transport system. Plays a major role in nickel/cobalt import in zinc-depleted conditions. Contributes to virulence. Required for full urease activity in vitro. This Staphylococcus aureus (strain NCTC 8325 / PS 47) protein is Metal-staphylopine import system ATP-binding protein CntF.